The following is a 49-amino-acid chain: uncharacterized protein (49 aa).

A signal peptide spans 1–22; it reads MKLNAFHLVVVVLIVSIFSVSS.

The protein localises to the secreted. This is an uncharacterized protein from Dictyostelium discoideum (Social amoeba).